The following is a 2453-amino-acid chain: Nuclear receptor corepressor 1 (2453 aa).

Over residues 1 to 29 the composition is skewed to polar residues; sequence MSSSGYPPNQGAFSTEQSRYPSHSVQYTF. Disordered stretches follow at residues 1–116, 147–177, and 206–231; these read MSSS…QVSD, PAFG…SKLS, and QQQL…VEQK. The tract at residues 1 to 373 is interaction with ZBTB33 and HEXIM1; it reads MSSSGYPPNQ…QRGAGLSATI (373 aa). Over residues 51-64 the composition is skewed to low complexity; the sequence is SQASQLLQQQQQQQ. Basic and acidic residues-rich tracts occupy residues 77–88 and 99–116; these read PGSDRPQERRSG and VDHD…QVSD. Ser172 is subject to Phosphoserine. Positions 174 to 216 form a coiled coil; it reads SKLSKEELIQSMDRVDREIAKVEQQILKLKKKQQQLEEEAAKP. Positions 212–221 are enriched in basic and acidic residues; the sequence is EAAKPPEPEK. At Ser224 the chain carries Phosphoserine. An interaction with SIN3A/B region spans residues 254–312; it reads FEGLGPKVELPLYNQPSDTKVYHENIKTNQVMRKKLILFFKRRNHARKQREQKICQRYD. Residues 299–328 adopt a coiled-coil conformation; it reads ARKQREQKICQRYDQLMEAWEKKVDRIENN. Residues 435–486 enclose the SANT 1 domain; the sequence is QFMNVWTDHEKEIFKDKFIQHPKNFGLIASYLERKSVPDCVLYYYLTKKNEN. 2 disordered regions span residues 497–631 and 677–908; these read KRRG…TEEE and LLQQ…PERQ. Positions 501–550 form a coiled coil; that stretch reads RNQQIARPSQEEKVEEKEEDKAEKTEKKEEEKKDDEEKDDKEDSKETTKE. Composition is skewed to basic and acidic residues over residues 509–531 and 541–556; these read SQEE…KEEE and KEDS…RTEA. The segment covering 592-604 has biased composition (low complexity); sequence EAAAANAAAAATE. Positions 605-616 are enriched in pro residues; sequence EPPPPLPPPPEP. The 52-residue stretch at 622–673 folds into the SANT 2 domain; it reads VETSRWTEEEMEVAKKGLVEHGRNWAAIAKMVGTKSEAQCKNFYFNYKRRHN. Polar residues predominate over residues 697–707; the sequence is QCESVASTVSA. Positions 708-727 are enriched in acidic residues; it reads QEDEDIEASNEEENPEDSEG. Residues 771 to 787 show a composition bias toward low complexity; that stretch reads TTDPAPCASPSSAVPTT. A compositionally biased stretch (basic and acidic residues) spans 851-885; that stretch reads GEGDAKERDLESTSEKTEARDEDVVVAEQIERPEP. Phosphoserine is present on Ser1011. Residues 1034–1058 form a disordered region; sequence VRLPTTRPTRPPPPLIPSSKTTVAS. A Glycyl lysine isopeptide (Lys-Gly) (interchain with G-Cter in SUMO1); alternate cross-link involves residue Lys1117. Residue Lys1117 forms a Glycyl lysine isopeptide (Lys-Gly) (interchain with G-Cter in SUMO2); alternate linkage. Ser1122 carries the phosphoserine modification. Residue Lys1195 forms a Glycyl lysine isopeptide (Lys-Gly) (interchain with G-Cter in SUMO2) linkage. 5 positions are modified to phosphoserine: Ser1206, Ser1207, Ser1274, Ser1292, and Ser1333. N6-acetyllysine is present on Lys1347. Thr1378 carries the phosphothreonine modification. A Glycyl lysine isopeptide (Lys-Gly) (interchain with G-Cter in SUMO2) cross-link involves residue Lys1400. A Glycyl lysine isopeptide (Lys-Gly) (interchain with G-Cter in SUMO2); alternate cross-link involves residue Lys1423. At Lys1423 the chain carries N6-acetyllysine; alternate. The tract at residues 1450–1544 is disordered; sequence GEPVRARHTS…SIPAKSPVPG (95 aa). A phosphoserine mark is found at Ser1459 and Ser1481. Positions 1459–1469 are enriched in polar residues; the sequence is SVVSSGPSVLR. Positions 1495–1514 are enriched in polar residues; it reads VSYQNTISRGSPMMNRTSDV. The interval 1510–2453 is interaction with C1D; the sequence is RTSDVSSSKS…QYETLSDSDD (944 aa). A Glycyl lysine isopeptide (Lys-Gly) (interchain with G-Cter in SUMO2) cross-link involves residue Lys1525. The residue at position 1598 (Ser1598) is a Phosphoserine. 2 disordered regions span residues 1697-1780 and 1902-1939; these read RPYN…VRTQ and ALPS…RTRG. Basic and acidic residues-rich tracts occupy residues 1718–1745 and 1919–1937; these read AERE…RERI and AGKD…ELRT. The short motif at 1949–1953 is the CORNR box 1 element; sequence IDVII. Residues 1959–2060 are disordered; sequence SDKDARERGS…SSQSEGMGQV (102 aa). Residues 1968–1979 show a composition bias toward low complexity; the sequence is SQSSDSSSSLSS. Ser1993 and Ser1997 each carry phosphoserine. Positions 2050–2129 are ID1; it reads PSSQSEGMGQ…QSQTVLHPRP (80 aa). Residues 2065–2068 are required for interaction with RARA in the absence of its ligand; the sequence is RLIT. The CORNR box 2 signature appears at 2073–2077; it reads ICQII. A compositionally biased stretch (polar residues) spans 2088–2124; the sequence is SQASTSTFQTSPSALSSTPVRTKTSSRYSPESQSQTV. The disordered stretch occupies residues 2088–2174; the sequence is SQASTSTFQT…SPPQGPAVHE (87 aa). Phosphoserine occurs at positions 2116, 2134, 2150, 2165, and 2198. Residues 2138-2156 show a composition bias toward basic and acidic residues; sequence LVDKSRGSRPGKSPERSHI. An ID2 region spans residues 2226–2287; sequence IFRKLNSSGG…EDIIRKALMG (62 aa). Residues 2277–2281 carry the CORNR box 3 motif; it reads LEDII. The interval 2303–2396 is disordered; it reads PVGIMPGSAS…RPSSTGSTQF (94 aa). Over residues 2310–2319 the composition is skewed to low complexity; it reads SASTSVVTSS. Thr2412 bears the Phosphothreonine mark. Ser2449 and Ser2451 each carry phosphoserine.

The protein belongs to the N-CoR nuclear receptor corepressors family. Forms a large corepressor complex that contains SIN3A/B and histone deacetylases HDAC1 and HDAC2. This complex associates with the thyroid receptor (TR) and the retinoid acid receptor (RAR) in the absence of ligand. Interacts directly with RARA; the interaction is facilitated with RARA trimethylation. Component of the N-Cor repressor complex, at least composed of CBFA2T3, HEXIM1, NCOR1, NCOR2, HDAC3, TBL1X, TBL1XR1, CORO2A and GPS2. Interacts with ZBTB33; the interaction serves to recruit the N-CoR complex to promoter regions containing methylated CpG dinucleotides. Interacts with TRIM28 and KDM3A. Interacts (via the RD1 domain) with BAZ1A (via its N-terminal); the interaction corepresses a number of NCOR1-regulated genes. Interacts with BCL6, C1D, DACH1, HEXIM1, HDAC7, RORA, RORC, SAP30, SIAH2, SIN3A and SIN3B. May interact with DEAF1. Interacts with RXRA. Interacts with SETD5. Interacts with VDR. Interacts with ZBTB7A. Interacts with AR. Interacts with HDAC3. Post-translationally, ubiquitinated; mediated by SIAH2 and leading to its subsequent proteasomal degradation. Ubiquitous.

Its subcellular location is the nucleus. In terms of biological role, mediates transcriptional repression by certain nuclear receptors. Part of a complex which promotes histone deacetylation and the formation of repressive chromatin structures which may impede the access of basal transcription factors. Participates in the transcriptional repressor activity produced by BCL6. Recruited by ZBTB7A to the androgen response elements/ARE on target genes, negatively regulates androgen receptor signaling and androgen-induced cell proliferation. Mediates the NR1D1-dependent repression and circadian regulation of TSHB expression. The NCOR1-HDAC3 complex regulates the circadian expression of the core clock gene ARTNL/BMAL1 and the genes involved in lipid metabolism in the liver. The chain is Nuclear receptor corepressor 1 (Ncor1) from Mus musculus (Mouse).